A 279-amino-acid chain; its full sequence is Energy-coupling factor transporter ATP-binding protein EcfA1 (279 aa).

The ABC transporter domain maps to 6-240 (VRLEHVFYKY…ADAMRAIGLG (235 aa)). 40–47 (GHNGSGKS) contributes to the ATP binding site.

Belongs to the ABC transporter superfamily. Energy-coupling factor EcfA family. As to quaternary structure, forms a stable energy-coupling factor (ECF) transporter complex composed of 2 membrane-embedded substrate-binding proteins (S component), 2 ATP-binding proteins (A component) and 2 transmembrane proteins (T component).

It localises to the cell membrane. Functionally, ATP-binding (A) component of a common energy-coupling factor (ECF) ABC-transporter complex. Unlike classic ABC transporters this ECF transporter provides the energy necessary to transport a number of different substrates. In Listeria innocua serovar 6a (strain ATCC BAA-680 / CLIP 11262), this protein is Energy-coupling factor transporter ATP-binding protein EcfA1.